We begin with the raw amino-acid sequence, 185 residues long: Photosystem I assembly protein Ycf4 (185 aa).

Helical transmembrane passes span 20–40 (GNFF…SVGA) and 57–77 (ILFF…LFIS).

Belongs to the Ycf4 family.

It localises to the plastid. It is found in the chloroplast thylakoid membrane. Functionally, seems to be required for the assembly of the photosystem I complex. This chain is Photosystem I assembly protein Ycf4, found in Agrostis stolonifera (Creeping bentgrass).